We begin with the raw amino-acid sequence, 307 residues long: Recombination-associated protein RdgC (307 aa).

It belongs to the RdgC family.

The protein localises to the cytoplasm. It is found in the nucleoid. May be involved in recombination. The sequence is that of Recombination-associated protein RdgC from Burkholderia orbicola (strain MC0-3).